The chain runs to 132 residues: MTKDELIARLRSLGEQLNRDVSLTGTKEELALRVAELKEELDDTDETAGQDTPLSRENVLTGHENEVGSAQPDTVILDTSELVTVVALVKLHTDALHATRDEPVAFVLPGTAFRVSAGVAAEMTERGLARMQ.

Positions 81–132 are capsid binding; it reads ELVTVVALVKLHTDALHATRDEPVAFVLPGTAFRVSAGVAAEMTERGLARMQ.

In terms of assembly, interacts with major capsid protein via c-terminus.

The protein resides in the host cytoplasm. Its function is as follows. Stimulates the interaction of procapsid with the terminase-DNA complex, thereby increasing the overall rate of DNA packaging. Before packaging, it likely coats the surface of the procapsid through binding mediated by C-terminal domain. FI presumably dissociates from the capsid once it inflates upon DNA packaging, and is not present in the mature virion. The polypeptide is DNA-packaging protein FI (Fi) (Escherichia coli (Bacteriophage lambda)).